A 708-amino-acid polypeptide reads, in one-letter code: MGNASSIVQTINVTGDGNVFKPSAETSSTAVPSLSLSPGMLNPGGVPWIAVGDETSVTSPGALRRMTSKDIPETAIINTDNSSGAVPSESALVPYIDEPLVVVTEHAITNFTKAEMALEFNREFLDKMRVLSVSPKYSDLLTYVDCYVGVSARQALNNFQKQVPVITPTRQTMYVDSIQAALKALEKWEIDLRVAQTLLPTNVPIGEVSCPMQSVVKLLDDQLPDDSLIRRYPKEAAVALAKRNGGIQWMDVSEGTVMNEAVNAVAASALAPSASAPPLEEKSKLTEQAMDLVTAAEPEIIASLAPVPAPVFAIPPKPADYNVRTLRIDEATWLRMIPKSMNTPFQIQVTDNTGTNWHLNLRGGTRVVNLDQIAPMRFVLDLGGKSYKETSWDPNGKKVGFIVFQSKIPFELWTAASQIGQATVVNYVQLYAEDSSFTAQSIIATTSLAYNYEPEQLNKTDPEMNYYLLATFIDSAAITPTNMTQPDVWDALLTMSPLSAGEVTVKGAVVSEVVPADLIGSYTPESLNASLPNDAARCMIDRASKIAEAIKIDDDAGPDEYSPNSVPIQGQLAISQLETGYGVRIFNPKGILSKIASRAMQAFIGDPSTIITQAAPVLSDKNNWIALAQGVKTSLRTKSLSAGVKTAVSKLSSSESIQNWTQGFLDKVSAHFPAPKPDCPTSGDSGESSNRRVKRDSYAGVVKRGYTR.

The N-myristoyl glycine; by host moiety is linked to residue G2. Residues N3, N12, N81, N110, N458, N482, N528, and N659 are each glycosylated (N-linked (GlcNAc...) asparagine; by host). The tract at residues 675 to 708 (PKPDCPTSGDSGESSNRRVKRDSYAGVVKRGYTR) is disordered.

Belongs to the orthoreovirus mu-1 protein family. As to quaternary structure, heterohexamer of three sigma-3 and three Mu-1 proteins. In terms of processing, cleaved during the endosomal proteolytic disassembly of the outer capsid. Mu-1 is proteolytically cleaved into mu-1N and mu-1C during the maturation step to generate the ISVP. Cleavage of mu-1 to mu-1C is dependent on myristoylation and binding to sigma-3 protein. Mu-1C is further cleaved into delta (59 kDa), and phi (13 kDa) segments during entry into the host cell cytoplasm. Post-translationally, mu-1 and mu-1N are N-terminally myristoylated. This acylation is essential for the membrane fusion activity.

It localises to the virion. It is found in the host cell membrane. The protein resides in the host endoplasmic reticulum. The protein localises to the host mitochondrion. In terms of biological role, major outer capsid protein involved in host cell membrane penetration. In the endocytic compartment, outer-capsid protein sigma-3 is removed by cathepsin proteases, which exposes the viral membrane-penetration protein mu-1. Both myristoylated peptides mu-1N and phi are released during infectious subvirion particles (ISVP) formation in the endosome. They associate with host membranes and mu-1N induces permeabilization and delivery of transcriptionally active viral particles into the host cell cytoplasm. Seems to induce apoptosis in the host cell. Its function is as follows. The viral outer shell polypeptides, of which mu-1 is one, impose structural constraints that prevent elongation of nascent transcripts by the RNA-dependent RNA polymerase lambda-3. This is Outer capsid protein mu-1 (M2) from Mammalia (T3D).